Consider the following 72-residue polypeptide: SRY-related protein AES6 (72 aa).

The segment at residues 1-69 (VKRPMNAFMV…KHMADYPDYK (69 aa)) is a DNA-binding region (HMG box).

It is found in the nucleus. The polypeptide is SRY-related protein AES6 (Alligator mississippiensis (American alligator)).